Here is a 464-residue protein sequence, read N- to C-terminus: Trigger factor (464 aa).

A PPIase FKBP-type domain is found at 169–256 (GDVAIVDYRG…MKELKAKELP (88 aa)).

The protein belongs to the FKBP-type PPIase family. Tig subfamily.

Its subcellular location is the cytoplasm. The catalysed reaction is [protein]-peptidylproline (omega=180) = [protein]-peptidylproline (omega=0). Functionally, involved in protein export. Acts as a chaperone by maintaining the newly synthesized protein in an open conformation. Functions as a peptidyl-prolyl cis-trans isomerase. The polypeptide is Trigger factor (Microcystis aeruginosa (strain NIES-843 / IAM M-2473)).